A 226-amino-acid chain; its full sequence is Putative methyltransferase RP459 (226 aa).

Belongs to the methyltransferase superfamily.

This chain is Putative methyltransferase RP459, found in Rickettsia prowazekii (strain Madrid E).